A 154-amino-acid polypeptide reads, in one-letter code: Crossover junction endodeoxyribonuclease RuvC (154 aa).

Residues D7, E67, and D139 contribute to the active site. Residues D7, E67, and D139 each coordinate Mg(2+).

The protein belongs to the RuvC family. In terms of assembly, homodimer which binds Holliday junction (HJ) DNA. The HJ becomes 2-fold symmetrical on binding to RuvC with unstacked arms; it has a different conformation from HJ DNA in complex with RuvA. In the full resolvosome a probable DNA-RuvA(4)-RuvB(12)-RuvC(2) complex forms which resolves the HJ. Mg(2+) serves as cofactor.

Its subcellular location is the cytoplasm. It carries out the reaction Endonucleolytic cleavage at a junction such as a reciprocal single-stranded crossover between two homologous DNA duplexes (Holliday junction).. Functionally, the RuvA-RuvB-RuvC complex processes Holliday junction (HJ) DNA during genetic recombination and DNA repair. Endonuclease that resolves HJ intermediates. Cleaves cruciform DNA by making single-stranded nicks across the HJ at symmetrical positions within the homologous arms, yielding a 5'-phosphate and a 3'-hydroxyl group; requires a central core of homology in the junction. The consensus cleavage sequence is 5'-(A/T)TT(C/G)-3'. Cleavage occurs on the 3'-side of the TT dinucleotide at the point of strand exchange. HJ branch migration catalyzed by RuvA-RuvB allows RuvC to scan DNA until it finds its consensus sequence, where it cleaves and resolves the cruciform DNA. The polypeptide is Crossover junction endodeoxyribonuclease RuvC (Prochlorococcus marinus (strain NATL2A)).